The chain runs to 142 residues: Large ribosomal subunit protein uL11 (142 aa).

Belongs to the universal ribosomal protein uL11 family. As to quaternary structure, part of the ribosomal stalk of the 50S ribosomal subunit. Interacts with L10 and the large rRNA to form the base of the stalk. L10 forms an elongated spine to which L12 dimers bind in a sequential fashion forming a multimeric L10(L12)X complex. One or more lysine residues are methylated.

In terms of biological role, forms part of the ribosomal stalk which helps the ribosome interact with GTP-bound translation factors. The protein is Large ribosomal subunit protein uL11 of Acidithiobacillus ferrooxidans (strain ATCC 23270 / DSM 14882 / CIP 104768 / NCIMB 8455) (Ferrobacillus ferrooxidans (strain ATCC 23270)).